A 121-amino-acid polypeptide reads, in one-letter code: Basic phospholipase A2 3 (121 aa).

7 cysteine pairs are disulfide-bonded: cysteine 26–cysteine 115, cysteine 28–cysteine 44, cysteine 43–cysteine 95, cysteine 49–cysteine 121, cysteine 50–cysteine 88, cysteine 57–cysteine 81, and cysteine 75–cysteine 86. Residues tyrosine 27, glycine 29, and glycine 31 each contribute to the Ca(2+) site. Residue histidine 47 is part of the active site. Aspartate 48 contributes to the Ca(2+) binding site. The active site involves aspartate 89.

It belongs to the phospholipase A2 family. Group II subfamily. D49 sub-subfamily. Ca(2+) serves as cofactor. As to expression, expressed by the venom gland.

It is found in the secreted. The enzyme catalyses a 1,2-diacyl-sn-glycero-3-phosphocholine + H2O = a 1-acyl-sn-glycero-3-phosphocholine + a fatty acid + H(+). In terms of biological role, PLA2 catalyzes the calcium-dependent hydrolysis of the 2-acyl groups in 3-sn-phosphoglycerides. The sequence is that of Basic phospholipase A2 3 from Daboia russelii (Russel's viper).